The sequence spans 510 residues: Lysine--tRNA ligase (510 aa).

E420 and E427 together coordinate Mg(2+).

This sequence belongs to the class-II aminoacyl-tRNA synthetase family. In terms of assembly, homodimer. It depends on Mg(2+) as a cofactor.

The protein localises to the cytoplasm. It carries out the reaction tRNA(Lys) + L-lysine + ATP = L-lysyl-tRNA(Lys) + AMP + diphosphate. In Psychrobacter sp. (strain PRwf-1), this protein is Lysine--tRNA ligase.